A 316-amino-acid chain; its full sequence is CD-NTase-associated protein 12 (316 aa).

The 118-residue stretch at 4 to 121 folds into the TIR domain; the sequence is RIFIGSSSEG…MLGITQTRYE (118 aa). Residues 161–316 form an STING domain region; that stretch reads STVIAISYFE…ECVEIIEPQP (156 aa). Phenylalanine 172, proline 237, and aspartate 253 together coordinate 3',3'-c-di-GMP.

This sequence in the C-terminal section; belongs to the bacterial STING family. In terms of assembly, forms homodimers; in the presence of c-di-GMP forms filaments with an ordered array of parallel-stacked subunits.

It carries out the reaction NAD(+) + H2O = ADP-D-ribose + nicotinamide + H(+). NAD(+) hydrolase activity is strongly stimulated by c-di-GMP, weakly by 3'3'-cGAMP, very weakly by c-di-AMP but not at all by 2'3'-cGAMP. Self-association of TIR domains is required for NADase activity. In terms of biological role, effector protein of a CBASS antiviral system with NAD(+) hydrolase activity. CBASS (cyclic oligonucleotide-based antiphage signaling system) provides immunity against bacteriophage. The CD-NTase protein synthesizes cyclic nucleotides in response to infection; these serve as specific second messenger signals. The signals activate a diverse range of effectors, leading to bacterial cell death and thus abortive phage infection. A type I-D(GG) CBASS system. Functionally, binds c-di-GMP (synthesized by the cognate CdnE encoded upstream in the same operon) but not c-di-AMP, 2'-3'-cGAMP, 3'-3'-cGAMP or cUMP-AMP (tested without the N-terminal TIR domain). Upon activation by c-di-GMP forms filaments which hydrolyze NAD(+); filament formation is required for enzyme activation. This is CD-NTase-associated protein 12 from Lachnospiraceae bacterium (strain RUG226).